A 591-amino-acid polypeptide reads, in one-letter code: Protein enabled homolog (591 aa).

Residues 1–111 (MSEQSICQAR…SAMMHALEVL (111 aa)) enclose the WH1 domain. The span at 115 to 136 (ETGPTLPRQNSQLPAQVQNGPS) shows a compositional bias: polar residues. Residues 115–146 (ETGPTLPRQNSQLPAQVQNGPSQEELEIQRRQ) are disordered. The residue at position 125 (Ser125) is a Phosphoserine. The stretch at 135-265 (PSQEELEIQR…LEWERERRIS (131 aa)) forms a coiled coil. A run of 9 repeats spans residues 156 to 160 (LERER), 161 to 165 (LERER), 166 to 170 (MERER), 171 to 175 (LERER), 176 to 180 (LERER), 181 to 185 (LERER), 186 to 190 (LEQEQ), 191 to 195 (LERER), and 196 to 200 (QERER). The tract at residues 156–200 (LERERLERERMERERLERERLERERLERERLEQEQLERERQERER) is 9 X 5 AA tandem repeats of [LMQ]-E-[QR]-E-[QR]. The segment covering 221–264 (RLDRERQERQERERLERLERERQERERQEQLEREQLEWERERRI) has biased composition (basic and acidic residues). The interval 221–379 (RLDRERQERQ…PPLPASGFFL (159 aa)) is disordered. At Ser265 the chain carries Phosphoserine; by PKA. The span at 275-305 (TPLNSVLGDSSASEPGLQAASQPAETPSQQG) shows a compositional bias: polar residues. 2 stretches are compositionally biased toward pro residues: residues 311–323 (LAPP…PPGP) and 330–373 (LPPP…PPLP). An EVH2 block A region spans residues 391 to 411 (GLAAAIAGAKLRKVSRMEDTS). An EVH2 region spans residues 391 to 588 (GLAAAIAGAK…DAIRQELSKS (198 aa)). Positions 400-403 (KLRK) match the KLKR motif. Residues 405–549 (SRMEDTSFPS…LSQPSANGVQ (145 aa)) are disordered. Over residues 432-443 (RGNGPLPLGGSG) the composition is skewed to gly residues. The EVH2 block B stretch occupies residues 442-459 (SGLMEEMSALLARRRRIA). Ile465 bears the Phosphothreonine mark. A phosphoserine mark is found at Glu471 and Glu475. Composition is skewed to polar residues over residues 479–491 (PVTS…STPE) and 499–509 (RTNTMNGSKSP). Residue Thr502 is modified to Phosphothreonine. Phosphoserine occurs at positions 506, 508, and 512. Residues 538 to 549 (TPLSQPSANGVQ) show a composition bias toward polar residues. The segment at 554–588 (DYDRLKQDILDEMRKELTKLKEELIDAIRQELSKS) is EVH2 block C. The stretch at 557 to 587 (RLKQDILDEMRKELTKLKEELIDAIRQELSK) forms a coiled coil.

This sequence belongs to the Ena/VASP family. In terms of assembly, homotetramer. Interacts with APBB1IP, APBB1, PFN1 and ROBO4. Isoforms, containing the polyproline-rich regions with PPLP motifs, bind the WW domain of APBB1IP. Isoforms, containing the PPSY motif, bind, in vitro, to the WW2 and WW3 domains of NEDD4 and to the WW1 domain of YAP1. Binds the SH3 domain of BAIAP2-alpha but only after the autoinhibitory region of BAIAP2-alpha has been blocked by interaction with CDC42. Interacts, via the EVH1/WH1 domain, with the Pro-rich domains from VCL, ZYX and Listeria monocytogenes actA and with TES (via LIM domains). The TES LIM domain and the Pro-rich domains from VCL or ZYX compete for the same binding site. Interaction with ZYX is important for targeting ENAH to focal adhesions and enhances production of actin-rich structures at the apical surface of cells. Interacts, through the Pro-rich region, with the C-terminal SH3 domain of DNMPB. Binds GPHN. Interacts with FAT1 (via EVH1 domains). Heterotrimer with TES and ACTL7A. Interacts with PRPF40A. In terms of processing, NTN1-induced PKA phosphorylation on Ser-265 directly parallels the formation of filopodial protrusions. In terms of tissue distribution, expressed in myoepithelia of parotid, breast, bronchial glands and sweat glands. Expressed in colon-rectum muscolaris mucosae epithelium, pancreas acinar ductal epithelium, endometrium epithelium, prostate fibromuscolar stroma and placenta vascular media. Overexpressed in a majority of breast cancer cell lines and primary breast tumor lesions.

It is found in the cytoplasm. The protein resides in the cytoskeleton. Its subcellular location is the cell projection. It localises to the lamellipodium. The protein localises to the filopodium. It is found in the synapse. The protein resides in the cell junction. Its subcellular location is the focal adhesion. Ena/VASP proteins are actin-associated proteins involved in a range of processes dependent on cytoskeleton remodeling and cell polarity such as axon guidance and lamellipodial and filopodial dynamics in migrating cells. ENAH induces the formation of F-actin rich outgrowths in fibroblasts. Acts synergistically with BAIAP2-alpha and downstream of NTN1 to promote filipodia formation. The chain is Protein enabled homolog (ENAH) from Homo sapiens (Human).